The primary structure comprises 164 residues: ATP synthase subunit b (164 aa).

Residues Gly-6–Ile-26 form a helical membrane-spanning segment.

This sequence belongs to the ATPase B chain family. F-type ATPases have 2 components, F(1) - the catalytic core - and F(0) - the membrane proton channel. F(1) has five subunits: alpha(3), beta(3), gamma(1), delta(1), epsilon(1). F(0) has three main subunits: a(1), b(2) and c(10-14). The alpha and beta chains form an alternating ring which encloses part of the gamma chain. F(1) is attached to F(0) by a central stalk formed by the gamma and epsilon chains, while a peripheral stalk is formed by the delta and b chains.

The protein localises to the cell membrane. F(1)F(0) ATP synthase produces ATP from ADP in the presence of a proton or sodium gradient. F-type ATPases consist of two structural domains, F(1) containing the extramembraneous catalytic core and F(0) containing the membrane proton channel, linked together by a central stalk and a peripheral stalk. During catalysis, ATP synthesis in the catalytic domain of F(1) is coupled via a rotary mechanism of the central stalk subunits to proton translocation. In terms of biological role, component of the F(0) channel, it forms part of the peripheral stalk, linking F(1) to F(0). This Streptococcus pyogenes serotype M12 (strain MGAS2096) protein is ATP synthase subunit b.